Here is a 63-residue protein sequence, read N- to C-terminus: Cecropin-A1 (63 aa).

An N-terminal signal peptide occupies residues 1-23; that stretch reads MNFYNIFVFVALILAITIGQSEA. Arg-62 carries the arginine amide modification.

It belongs to the cecropin family.

The protein resides in the secreted. Cecropins have lytic and antibacterial activity against several Gram-positive and Gram-negative bacteria. The protein is Cecropin-A1 (CecA1) of Drosophila sechellia (Fruit fly).